Consider the following 518-residue polypeptide: Protein nucleotidyltransferase YdiU (518 aa).

Residues Gly100, Gly102, Arg103, Lys123, Asp135, Gly136, Arg193, and Arg200 each coordinate ATP. Asp270 (proton acceptor) is an active-site residue. Asn271 and Asp280 together coordinate Mg(2+). Asp280 is an ATP binding site.

It belongs to the SELO family. Mg(2+) serves as cofactor. Mn(2+) is required as a cofactor.

It carries out the reaction L-seryl-[protein] + ATP = 3-O-(5'-adenylyl)-L-seryl-[protein] + diphosphate. The catalysed reaction is L-threonyl-[protein] + ATP = 3-O-(5'-adenylyl)-L-threonyl-[protein] + diphosphate. The enzyme catalyses L-tyrosyl-[protein] + ATP = O-(5'-adenylyl)-L-tyrosyl-[protein] + diphosphate. It catalyses the reaction L-histidyl-[protein] + UTP = N(tele)-(5'-uridylyl)-L-histidyl-[protein] + diphosphate. It carries out the reaction L-seryl-[protein] + UTP = O-(5'-uridylyl)-L-seryl-[protein] + diphosphate. The catalysed reaction is L-tyrosyl-[protein] + UTP = O-(5'-uridylyl)-L-tyrosyl-[protein] + diphosphate. Functionally, nucleotidyltransferase involved in the post-translational modification of proteins. It can catalyze the addition of adenosine monophosphate (AMP) or uridine monophosphate (UMP) to a protein, resulting in modifications known as AMPylation and UMPylation. The chain is Protein nucleotidyltransferase YdiU from Xanthomonas oryzae pv. oryzae (strain PXO99A).